We begin with the raw amino-acid sequence, 170 residues long: Copper transporter 1 (170 aa).

The interval 1 to 29 is disordered; it reads MDHDHMHGMPRPSSSSSSSPSSMMNNGSM. The segment covering 9 to 29 has biased composition (low complexity); it reads MPRPSSSSSSSPSSMMNNGSM. Helical transmembrane passes span 65–85 and 114–134; these read GMYALCLIFVFFLAVLTEWLA and IGLAYLVMLAVMSFNAGVFLV.

This sequence belongs to the copper transporter (Ctr) (TC 1.A.56) family. SLC31A subfamily. In terms of tissue distribution, expressed in the root apex, lateral root primordia, embryo, trichomes, guard cells and pollen grains.

The protein localises to the membrane. Copper transporter involved in copper acquisition and transport in leaves. Required for copper homeostasis and normal plant growth and development. This is Copper transporter 1 (COPT1) from Arabidopsis thaliana (Mouse-ear cress).